A 461-amino-acid polypeptide reads, in one-letter code: Tubulin gamma-1 chain (461 aa).

142-148 is a binding site for GTP; it reads AGGTGSG.

The protein belongs to the tubulin family.

It is found in the cytoplasm. The protein localises to the cytoskeleton. Its subcellular location is the microtubule organizing center. The protein resides in the centrosome. Its function is as follows. Tubulin is the major constituent of microtubules. The gamma chain is found at microtubule organizing centers (MTOC) such as the spindle poles or the centrosome, suggesting that it is involved in the minus-end nucleation of microtubule assembly. The polypeptide is Tubulin gamma-1 chain (Euplotoides octocarinatus (Freshwater ciliate)).